The primary structure comprises 193 residues: Orotate phosphoribosyltransferase (193 aa).

Residues Arg85, Lys89, His91, and 111-119 each bind 5-phospho-alpha-D-ribose 1-diphosphate; that span reads DDVLTTGKS. 2 residues coordinate orotate: Thr115 and Arg143.

Belongs to the purine/pyrimidine phosphoribosyltransferase family. PyrE subfamily. Homodimer. Mg(2+) serves as cofactor.

The catalysed reaction is orotidine 5'-phosphate + diphosphate = orotate + 5-phospho-alpha-D-ribose 1-diphosphate. Its pathway is pyrimidine metabolism; UMP biosynthesis via de novo pathway; UMP from orotate: step 1/2. Catalyzes the transfer of a ribosyl phosphate group from 5-phosphoribose 1-diphosphate to orotate, leading to the formation of orotidine monophosphate (OMP). The chain is Orotate phosphoribosyltransferase from Pyrobaculum islandicum (strain DSM 4184 / JCM 9189 / GEO3).